A 305-amino-acid chain; its full sequence is Sulfate adenylyltransferase subunit 2 (305 aa).

It belongs to the PAPS reductase family. CysD subfamily. Heterodimer composed of CysD, the smaller subunit, and CysN.

It carries out the reaction sulfate + ATP + H(+) = adenosine 5'-phosphosulfate + diphosphate. It participates in sulfur metabolism; hydrogen sulfide biosynthesis; sulfite from sulfate: step 1/3. Its function is as follows. With CysN forms the ATP sulfurylase (ATPS) that catalyzes the adenylation of sulfate producing adenosine 5'-phosphosulfate (APS) and diphosphate, the first enzymatic step in sulfur assimilation pathway. APS synthesis involves the formation of a high-energy phosphoric-sulfuric acid anhydride bond driven by GTP hydrolysis by CysN coupled to ATP hydrolysis by CysD. This Myxococcus xanthus (strain DK1622) protein is Sulfate adenylyltransferase subunit 2.